The chain runs to 210 residues: Thymidylate kinase (210 aa).

Position 10–17 (10–17) interacts with ATP; that stretch reads GPEGAGKS.

Belongs to the thymidylate kinase family.

The catalysed reaction is dTMP + ATP = dTDP + ADP. Functionally, phosphorylation of dTMP to form dTDP in both de novo and salvage pathways of dTTP synthesis. The sequence is that of Thymidylate kinase from Pseudomonas aeruginosa (strain UCBPP-PA14).